The primary structure comprises 405 residues: L-carnitine CoA-transferase (405 aa).

The CoA site is built by lysine 97 and arginine 104. The Nucleophile role is filled by aspartate 169.

Belongs to the CoA-transferase III family. CaiB subfamily. As to quaternary structure, homodimer.

The protein resides in the cytoplasm. It carries out the reaction crotonobetainyl-CoA + (R)-carnitine = crotonobetaine + (R)-carnitinyl-CoA. It catalyses the reaction 4-(trimethylamino)butanoyl-CoA + (R)-carnitine = (R)-carnitinyl-CoA + 4-(trimethylamino)butanoate. The protein operates within amine and polyamine metabolism; carnitine metabolism. In terms of biological role, catalyzes the reversible transfer of the CoA moiety from gamma-butyrobetainyl-CoA to L-carnitine to generate L-carnitinyl-CoA and gamma-butyrobetaine. Is also able to catalyze the reversible transfer of the CoA moiety from gamma-butyrobetainyl-CoA or L-carnitinyl-CoA to crotonobetaine to generate crotonobetainyl-CoA. This chain is L-carnitine CoA-transferase, found in Escherichia coli (strain 55989 / EAEC).